Here is a 585-residue protein sequence, read N- to C-terminus: MNLIEYEAYFWAKFFVAERAVSGVIIILIYLIIASVLAYILSFHIAKIYLDEKTVFSKITGRIISFFERMIGESPDHGMTFKEYFINLLLFNFFAGLISFLVIMFQKYLPFSYDTVGMSPSLDFNTVVSFLTNTNLQHYSNPMRLSYFSQTFVITGLMFLSAGTGFAASMAFVRGIRTDTGNIGNFYHDFLVSIFDLILPLTVILTVILILAGIPETMQRYITVNAFLTNKVYNIPLGPVATLEAIKNIGTNGGGFYGANAAYPFENPDWFTNLVEFVSFVIIPLASLISLGIVFGDRKFGRMLYWVVMFFFIFDALFAFFGEFAGVPFLHLGYYTGNMVGKETAIGISQSTIFAVGATITSTGASNAALVSYTPAGIIGVLIGLLLNDPLGGVGTGVLNIFMYIIFTVFIASLMVGKLPEIMSLRISSKEIKYSTLSLITHPLLVVIPLGITLMIPHLMSSFVNPESSRITELLYEFASAASNNGSEMGGFITNQPFFNYLDGVLMLLGRYLLMAFQLIIAQSFSVKKAKAQYYRSIDTSNWIFGVLLIAAMILIGLLSYFPIIVLGPLLSWAHDFNLILEAMV.

12 consecutive transmembrane segments (helical) span residues 23-43 (GVIIILIYLIIASVLAYILSF), 85-105 (FINLLLFNFFAGLISFLVIMF), 152-172 (FVITGLMFLSAGTGFAASMAF), 194-214 (IFDLILPLTVILTVILILAGI), 275-295 (VEFVSFVIIPLASLISLGIVF), 307-327 (VVMFFFIFDALFAFFGEFAGV), 345-365 (AIGISQSTIFAVGATITSTGA), 367-387 (NAALVSYTPAGIIGVLIGLLL), 397-417 (GVLNIFMYIIFTVFIASLMVG), 444-464 (LLVVIPLGITLMIPHLMSSFV), 502-522 (LDGVLMLLGRYLLMAFQLIIA), and 547-567 (VLLIAAMILIGLLSYFPIIVL).

The protein belongs to the KdpA family. As to quaternary structure, the system is composed of three essential subunits: KdpA, KdpB and KdpC.

The protein resides in the cell membrane. Its function is as follows. Part of the high-affinity ATP-driven potassium transport (or Kdp) system, which catalyzes the hydrolysis of ATP coupled with the electrogenic transport of potassium into the cytoplasm. This subunit binds the extracellular potassium ions and delivers the ions to the membrane domain of KdpB through an intramembrane tunnel. The chain is Potassium-transporting ATPase potassium-binding subunit from Thermoplasma acidophilum (strain ATCC 25905 / DSM 1728 / JCM 9062 / NBRC 15155 / AMRC-C165).